A 432-amino-acid chain; its full sequence is Benzoyl-CoA reductase subunit B (432 aa).

Belongs to the FldB/FldC dehydratase alpha/beta subunit family. As to quaternary structure, heterotetramer composed of A, B, C, and D subunits. It depends on iron-sulfur cluster as a cofactor. An oxidized flavin is required as a cofactor.

The catalysed reaction is cyclohexa-1,5-diene-1-carbonyl-CoA + oxidized 2[4Fe-4S]-[ferredoxin] + 2 ADP + 2 phosphate = reduced 2[4Fe-4S]-[ferredoxin] + benzoyl-CoA + 2 ATP + 2 H2O. It catalyses the reaction 3-hydroxybenzoyl-CoA + AH2 + 2 ATP + 2 H2O = 3-hydroxycyclohexa-1,5-diene-1-carbonyl-CoA + A + 2 ADP + 2 phosphate + 2 H(+). Functionally, catalyzes the anaerobic reduction of benzoyl-CoA and 3-hydroxybenzoyl-CoA to form cyclohexa-1,5-diene-1-carbonyl-CoA and 3-hydroxycyclohexa-1,5-diene-1-carbonyl-CoA, respectively. The enzyme also reduces other benzoyl-CoA analogs with small substituents at the aromatic ring. This Thauera aromatica protein is Benzoyl-CoA reductase subunit B (bcrB).